Here is a 143-residue protein sequence, read N- to C-terminus: Late embryogenesis abundant protein 1 (143 aa).

The span at 1-17 shows a compositional bias: low complexity; that stretch reads MSSQQNQNRQGEQQEQG. The interval 1–143 is disordered; sequence MSSQQNQNRQ…QAGEKVKGRD (143 aa). 4 repeat units span residues 47–57, 69–79, 80–90, and 91–101. Basic and acidic residues-rich tracts occupy residues 47 to 60 and 69 to 143; these read KTAE…ETIR and KGQE…KGRD. A 4 X 11 AA approximate repeats region spans residues 47–101; that stretch reads KTAEFRDSAGETIRDLTGQAQEKGQEFKERAGEKAEETKQRAGEKMDETKQRAGE.

The protein belongs to the LEA type 4 family.

Functionally, may be involved in defense against water stress. This chain is Late embryogenesis abundant protein 1, found in Aphelenchoides avenae (Mycophagous nematode worm).